Consider the following 156-residue polypeptide: 17.4 kDa class I heat shock protein (156 aa).

The sHSP domain occupies Asp-42–Gly-156.

The protein belongs to the small heat shock protein (HSP20) family. In terms of assembly, may form oligomeric structures. Binds to AKR2A.

The protein resides in the cytoplasm. The polypeptide is 17.4 kDa class I heat shock protein (HSP17.4A) (Arabidopsis thaliana (Mouse-ear cress)).